A 301-amino-acid polypeptide reads, in one-letter code: Homoserine O-acetyltransferase (301 aa).

Cysteine 142 functions as the Acyl-thioester intermediate in the catalytic mechanism. 2 residues coordinate substrate: lysine 163 and serine 192. Histidine 235 acts as the Proton acceptor in catalysis. Residue glutamate 237 is part of the active site. A substrate-binding site is contributed by arginine 249.

This sequence belongs to the MetA family.

It is found in the cytoplasm. It catalyses the reaction L-homoserine + acetyl-CoA = O-acetyl-L-homoserine + CoA. It participates in amino-acid biosynthesis; L-methionine biosynthesis via de novo pathway; O-acetyl-L-homoserine from L-homoserine: step 1/1. Functionally, transfers an acetyl group from acetyl-CoA to L-homoserine, forming acetyl-L-homoserine. The protein is Homoserine O-acetyltransferase of Bacillus mycoides (strain KBAB4) (Bacillus weihenstephanensis).